We begin with the raw amino-acid sequence, 136 residues long: Snaclec rhodocytin subunit alpha (136 aa).

3 disulfides stabilise this stretch: Cys-5–Cys-16, Cys-33–Cys-131, and Cys-106–Cys-123. Positions 12–132 (YDQHCYQAFN…CEQMHAFVCK (121 aa)) constitute a C-type lectin domain.

It belongs to the snaclec family. In terms of assembly, dimer (non-covalently linked) of heterodimers of subunits alpha and beta (disulfide-linked). As to expression, expressed by the venom gland.

Its subcellular location is the secreted. In terms of biological role, elicits platelet aggregation by the binding to the C-type lectin domain family 1 member B (CLEC1B/CLEC2). Binding leads to tyrosine phosphorylation in the cytoplasmic tail of CLEC1B, which promotes the binding of spleen tyrosine kinase (Syk), subsequent activation of PLC-gamma-2, and platelet activation and aggregation. Binding to GPIbalpha (GP1BA) and alpha-2/beta-1 (ITGA2/ITGB1) may also induce aggregation, but this is controversial. This is Snaclec rhodocytin subunit alpha from Calloselasma rhodostoma (Malayan pit viper).